The chain runs to 997 residues: Glutamate [NMDA] receptor subunit 1 (997 aa).

Residues 1 to 26 form the signal peptide; that stretch reads MAVAGFVFCRPLFGLAIVLLVAPIDA. At 27–573 the chain is on the extracellular side; the sequence is AQRHTASDNP…TLVSFLQPFS (547 aa). N-linked (GlcNAc...) asparagine glycans are attached at residues Asn-258, Asn-314, Asn-345, Asn-397, Asn-454, Asn-481, and Asn-501. Glycine is bound by residues 530–532 and Arg-537; that span reads PLT. Residues 574–594 form a helical membrane-spanning segment; it reads NTLWILVMVSVHVVALVLYLL. Over 595–651 the chain is Cytoplasmic; that stretch reads DRFSPFGRFKLSHSDSNEEKALNLSSAVWFAWGVLLNSGIGEGTPRSFSARVLGMVW. Residues 652–672 traverse the membrane as a helical segment; sequence AGFAMIIVASYTANLAAFLVL. Residues 673 to 831 lie on the Extracellular side of the membrane; the sequence is ERPKTKLSGI…KTPNTLGLKN (159 aa). An N-linked (GlcNAc...) asparagine glycan is attached at Asn-693. Glycine-binding residues include Ser-703 and Asp-747. A helical membrane pass occupies residues 832–852; the sequence is MAGVFILVGVGIAGGVGLIII. Over 853–997 the chain is Cytoplasmic; it reads EVIYKKHQVK…YTSDVSHLVV (145 aa). Residues 970–997 form a disordered region; the sequence is LGKTRPQQSVLPPRYSPGYTSDVSHLVV. Residues 987 to 997 show a composition bias toward polar residues; sequence GYTSDVSHLVV.

It belongs to the glutamate-gated ion channel (TC 1.A.10.1) family. Forms a heteromeric NMDA channel with Nmdar2.

The protein localises to the cell membrane. It is found in the postsynaptic cell membrane. The protein resides in the postsynaptic density. Functionally, NMDA receptor subtype of glutamate-gated ion channels with high calcium permeability and voltage-dependent sensitivity to magnesium. Mediated by glycine. This protein plays a key role in synaptic plasticity, synaptogenesis, excitotoxicity, memory acquisition and learning. It mediates neuronal functions in glutamate neurotransmission. Is involved in the cell surface targeting of NMDA receptors. Plays a role in associative learning and in long-term memory consolidation. The polypeptide is Glutamate [NMDA] receptor subunit 1 (Drosophila sechellia (Fruit fly)).